Reading from the N-terminus, the 60-residue chain is Large ribosomal subunit protein bL32 (60 aa).

Belongs to the bacterial ribosomal protein bL32 family.

This Geobacter sulfurreducens (strain ATCC 51573 / DSM 12127 / PCA) protein is Large ribosomal subunit protein bL32.